A 142-amino-acid chain; its full sequence is Large ribosomal subunit protein uL13 (142 aa).

It belongs to the universal ribosomal protein uL13 family. As to quaternary structure, part of the 50S ribosomal subunit.

In terms of biological role, this protein is one of the early assembly proteins of the 50S ribosomal subunit, although it is not seen to bind rRNA by itself. It is important during the early stages of 50S assembly. In Chromobacterium violaceum (strain ATCC 12472 / DSM 30191 / JCM 1249 / CCUG 213 / NBRC 12614 / NCIMB 9131 / NCTC 9757 / MK), this protein is Large ribosomal subunit protein uL13.